The sequence spans 716 residues: Fatty acid oxidation complex subunit alpha (716 aa).

An enoyl-CoA hydratase/isomerase region spans residues methionine 1–alanine 189. Aspartate 296 contacts substrate. The segment at lysine 311–alanine 716 is 3-hydroxyacyl-CoA dehydrogenase. NAD(+) contacts are provided by residues methionine 324, aspartate 343, valine 400–glutamate 402, lysine 407, and serine 429. Histidine 450 functions as the For 3-hydroxyacyl-CoA dehydrogenase activity in the catalytic mechanism. Asparagine 453 is a binding site for NAD(+). Asparagine 500 and tyrosine 660 together coordinate substrate.

It in the N-terminal section; belongs to the enoyl-CoA hydratase/isomerase family. This sequence in the C-terminal section; belongs to the 3-hydroxyacyl-CoA dehydrogenase family. As to quaternary structure, heterotetramer of two alpha chains (FadB) and two beta chains (FadA).

It catalyses the reaction a (3S)-3-hydroxyacyl-CoA + NAD(+) = a 3-oxoacyl-CoA + NADH + H(+). It carries out the reaction a (3S)-3-hydroxyacyl-CoA = a (2E)-enoyl-CoA + H2O. The enzyme catalyses a 4-saturated-(3S)-3-hydroxyacyl-CoA = a (3E)-enoyl-CoA + H2O. The catalysed reaction is (3S)-3-hydroxybutanoyl-CoA = (3R)-3-hydroxybutanoyl-CoA. It catalyses the reaction a (3Z)-enoyl-CoA = a 4-saturated (2E)-enoyl-CoA. It carries out the reaction a (3E)-enoyl-CoA = a 4-saturated (2E)-enoyl-CoA. The protein operates within lipid metabolism; fatty acid beta-oxidation. Functionally, involved in the aerobic and anaerobic degradation of long-chain fatty acids via beta-oxidation cycle. Catalyzes the formation of 3-oxoacyl-CoA from enoyl-CoA via L-3-hydroxyacyl-CoA. It can also use D-3-hydroxyacyl-CoA and cis-3-enoyl-CoA as substrate. The sequence is that of Fatty acid oxidation complex subunit alpha from Shewanella baltica (strain OS223).